The following is a 404-amino-acid chain: Cysteine desulfurase IscS (404 aa).

Pyridoxal 5'-phosphate-binding positions include 75 to 76 (AT), asparagine 155, glutamine 183, and 203 to 205 (SAH). Lysine 206 carries the N6-(pyridoxal phosphate)lysine modification. Threonine 243 serves as a coordination point for pyridoxal 5'-phosphate. Cysteine 328 functions as the Cysteine persulfide intermediate in the catalytic mechanism. Cysteine 328 contributes to the [2Fe-2S] cluster binding site.

Belongs to the class-V pyridoxal-phosphate-dependent aminotransferase family. NifS/IscS subfamily. Homodimer. Forms a heterotetramer with IscU, interacts with other sulfur acceptors. It depends on pyridoxal 5'-phosphate as a cofactor.

The protein localises to the cytoplasm. The catalysed reaction is (sulfur carrier)-H + L-cysteine = (sulfur carrier)-SH + L-alanine. Its pathway is cofactor biosynthesis; iron-sulfur cluster biosynthesis. Functionally, master enzyme that delivers sulfur to a number of partners involved in Fe-S cluster assembly, tRNA modification or cofactor biosynthesis. Catalyzes the removal of elemental sulfur atoms from cysteine to produce alanine. Functions as a sulfur delivery protein for Fe-S cluster synthesis onto IscU, an Fe-S scaffold assembly protein, as well as other S acceptor proteins. The protein is Cysteine desulfurase IscS of Aeromonas hydrophila subsp. hydrophila (strain ATCC 7966 / DSM 30187 / BCRC 13018 / CCUG 14551 / JCM 1027 / KCTC 2358 / NCIMB 9240 / NCTC 8049).